The chain runs to 126 residues: Holo-[acyl-carrier-protein] synthase (126 aa).

Mg(2+) is bound by residues Asp-9 and Glu-58.

This sequence belongs to the P-Pant transferase superfamily. AcpS family. Mg(2+) is required as a cofactor.

The protein resides in the cytoplasm. The catalysed reaction is apo-[ACP] + CoA = holo-[ACP] + adenosine 3',5'-bisphosphate + H(+). In terms of biological role, transfers the 4'-phosphopantetheine moiety from coenzyme A to a Ser of acyl-carrier-protein. The protein is Holo-[acyl-carrier-protein] synthase of Buchnera aphidicola subsp. Cinara cedri (strain Cc).